A 379-amino-acid polypeptide reads, in one-letter code: GDP-mannose transporter 1 (379 aa).

The Cytoplasmic segment spans residues 1 to 39 (MTDNRKPEDYTIEMDKLGQNKNYQAPPPPPQPRSSTASS). The tract at residues 17–38 (LGQNKNYQAPPPPPQPRSSTAS) is disordered. Residues 40–60 (ISNNAALSVLAYCGSSILMTV) form a helical membrane-spanning segment. Over 61–69 (MNKYVLSSD) the chain is Lumenal. Residues 70 to 90 (FNLNFFLLCVQSLVCIIAIQL) traverse the membrane as a helical segment. The Cytoplasmic segment spans residues 91–110 (CKACGLITYRDFNLDEARKW). A helical membrane pass occupies residues 111-133 (FPITLLLIGMIYTGSKALQFLSI). The Lumenal portion of the chain corresponds to 134-136 (PVY). A helical transmembrane segment spans residues 137–156 (TIFKNLTIILIAYGEVLWFG). Residues 157 to 162 (GSVTNL) are Cytoplasmic-facing. The chain crosses the membrane as a helical span at residues 163–182 (TLFSFGLMVFSSIIAAWADI). The Lumenal portion of the chain corresponds to 183–198 (KHAIESSGDATSKVST). A helical membrane pass occupies residues 199–219 (LNAGYIWMLINCLCTSSYVLG). Residues 220–233 (MRKRIKLTNFKDFD) are Cytoplasmic-facing. The chain crosses the membrane as a helical span at residues 234-254 (TMFYNNLLSIPVLIVCSGILE). Residues 255–272 (DWSPANVARNFPSADRNG) lie on the Lumenal side of the membrane. A helical transmembrane segment spans residues 273–293 (IMFAMILSGLSTVFISYTSAW). Topologically, residues 294–301 (CVRVTSST) are cytoplasmic. A helical transmembrane segment spans residues 302–322 (TYSMVGALNKLPIALSGLIFF). At 323-325 (DAP) the chain is on the lumenal side. Residues 326-346 (VTFPSVSAIMVGFVSGIVYAV) traverse the membrane as a helical segment. The Cytoplasmic segment spans residues 347 to 379 (AKIKQNAKPKVGILPTTNPVSASSQSMRDSLRS).

It belongs to the TPT transporter family. SLC35D subfamily. In terms of assembly, homooligomer.

It localises to the golgi apparatus membrane. The protein localises to the cytoplasmic vesicle membrane. Its subcellular location is the endoplasmic reticulum membrane. Functionally, involved in the import of GDP-mannose from the cytoplasm into the Golgi lumen. This Emericella nidulans (strain FGSC A4 / ATCC 38163 / CBS 112.46 / NRRL 194 / M139) (Aspergillus nidulans) protein is GDP-mannose transporter 1 (gmt1).